Reading from the N-terminus, the 66-residue chain is uncharacterized protein (66 aa).

A run of 2 helical transmembrane segments spans residues 4–24 and 38–58; these read ALFI…LLIF and LLTP…ILVL.

It localises to the membrane. This is an uncharacterized protein from Saccharomyces cerevisiae (strain ATCC 204508 / S288c) (Baker's yeast).